Consider the following 161-residue polypeptide: Ribonuclease H (161 aa).

The 140-residue stretch at 2–141 folds into the RNase H type-1 domain; the sequence is TNNEIIAATD…ADSLARQAAN (140 aa). Residues D11, E46, D69, and D133 each contribute to the Mg(2+) site.

This sequence belongs to the RNase H family. In terms of assembly, monomer. Requires Mg(2+) as cofactor.

It localises to the cytoplasm. It catalyses the reaction Endonucleolytic cleavage to 5'-phosphomonoester.. Functionally, endonuclease that specifically degrades the RNA of RNA-DNA hybrids. The chain is Ribonuclease H from Tropheryma whipplei (strain TW08/27) (Whipple's bacillus).